The primary structure comprises 47 residues: Bacteriocin curvaticin DN317 (47 aa).

Belongs to the bacteriocin class IIA/YGNGV family.

Its subcellular location is the secreted. In terms of biological role, has bactericidal activity against various Gram-negative Campylobacter, and the Gram-positive L.monocytogenes and B.subtilis. In vitro, inhibits C.jejuni strain ATCC 33560 (MIC=27.3 ug/ml). The polypeptide is Bacteriocin curvaticin DN317 (Latilactobacillus curvatus (Lactobacillus curvatus)).